Consider the following 157-residue polypeptide: MRALYPGSFDPLTLGHLDLIERGCALFGEVVVAVLSNPAKTSTFTLQQRFNQIHVATAHCKGVSVICFEGLTVSCARHNQVDLILRGLRAMSDFEYELQIAHTNRSLAPDFETIFLATAAHHSFLSSSMVKEVARFGGNIDHMVPEVVAQDLHRLFN.

A substrate-binding site is contributed by Ser-8. Residues 8-9 and His-16 each bind ATP; that span reads SF. Substrate contacts are provided by Lys-40, Thr-72, and Arg-86. ATP is bound by residues 87-89, Glu-97, and 122-128; these read GLR and HSFLSSS.

The protein belongs to the bacterial CoaD family. As to quaternary structure, homohexamer. Requires Mg(2+) as cofactor.

It localises to the cytoplasm. It catalyses the reaction (R)-4'-phosphopantetheine + ATP + H(+) = 3'-dephospho-CoA + diphosphate. It functions in the pathway cofactor biosynthesis; coenzyme A biosynthesis; CoA from (R)-pantothenate: step 4/5. In terms of biological role, reversibly transfers an adenylyl group from ATP to 4'-phosphopantetheine, yielding dephospho-CoA (dPCoA) and pyrophosphate. This is Phosphopantetheine adenylyltransferase from Prochlorococcus marinus (strain MIT 9313).